The chain runs to 208 residues: Urease accessory protein UreG 2 (208 aa).

16–23 contributes to the GTP binding site; that stretch reads GPVGSGKT.

This sequence belongs to the SIMIBI class G3E GTPase family. UreG subfamily. As to quaternary structure, homodimer. UreD, UreF and UreG form a complex that acts as a GTP-hydrolysis-dependent molecular chaperone, activating the urease apoprotein by helping to assemble the nickel containing metallocenter of UreC. The UreE protein probably delivers the nickel.

The protein resides in the cytoplasm. Facilitates the functional incorporation of the urease nickel metallocenter. This process requires GTP hydrolysis, probably effectuated by UreG. The polypeptide is Urease accessory protein UreG 2 (Methylobacterium radiotolerans (strain ATCC 27329 / DSM 1819 / JCM 2831 / NBRC 15690 / NCIMB 10815 / 0-1)).